The following is a 927-amino-acid chain: Heat shock protein hsp98 (927 aa).

In terms of domain architecture, Clp R spans 2–162 (TSKMEFTDRA…TDAIQAIRGT (161 aa)). Repeat stretches follow at residues 7 to 87 (FTDR…LVRL) and 99 to 162 (MAPS…IRGT). The NBD1 stretch occupies residues 179 to 428 (LAKFTIDMTA…AVRVARESQP (250 aa)). Residue 224 to 231 (GEPGVGKT) participates in ATP binding. Residues 429 to 553 (EIIDSLERKL…AALNAAAAET (125 aa)) adopt a coiled-coil conformation. Residues 454–473 (EASKARLEQAKKDAENVEEE) are disordered. Positions 562–752 (VGPDQINEIV…IVVMTSNLGA (191 aa)) are NBD2. Residue 635 to 642 (GPSGTGKT) coordinates ATP. Residues 908 to 927 (EDAVDEVAPESEMDEDLYDD) are disordered.

This sequence belongs to the ClpA/ClpB family. As to quaternary structure, homohexamer, forming a ring with a central pore.

The protein localises to the cytoplasm. It is found in the nucleus. Its function is as follows. Required, in concert with Hsp40 and Hsp70 and small Hsps, for the dissociation, resolubilization and refolding of aggregates of damaged proteins after heat or other environmental stresses. Extracts proteins from aggregates by unfolding and threading them in an ATP-dependent process through the axial channel of the protein hexamer, after which they can be refolded by components of the Hsp70/Hsp40 chaperone system. The sequence is that of Heat shock protein hsp98 (hsp98) from Neurospora crassa (strain ATCC 24698 / 74-OR23-1A / CBS 708.71 / DSM 1257 / FGSC 987).